A 246-amino-acid chain; its full sequence is Large ribosomal subunit protein uL30-like 1 (246 aa).

The residue at position 54 (S54) is a Phosphoserine.

The protein belongs to the universal ribosomal protein uL30 family.

The protein is Large ribosomal subunit protein uL30-like 1 (RPL7L1) of Pongo abelii (Sumatran orangutan).